Reading from the N-terminus, the 172-residue chain is Adenine phosphoribosyltransferase (172 aa).

It belongs to the purine/pyrimidine phosphoribosyltransferase family. In terms of assembly, homodimer.

Its subcellular location is the cytoplasm. The enzyme catalyses AMP + diphosphate = 5-phospho-alpha-D-ribose 1-diphosphate + adenine. The protein operates within purine metabolism; AMP biosynthesis via salvage pathway; AMP from adenine: step 1/1. Functionally, catalyzes a salvage reaction resulting in the formation of AMP, that is energically less costly than de novo synthesis. The protein is Adenine phosphoribosyltransferase of Methanococcus maripaludis (strain C5 / ATCC BAA-1333).